Reading from the N-terminus, the 201-residue chain is Keratin-associated protein 4-12 (201 aa).

Repeat copies occupy residues 5–9 (CCGSV), 20–24 (CCRPS), 25–29 (CCQTT), 30–34 (CCRTT), 35–39 (CCRPS), 40–44 (CCVSS), 45–49 (CCRPQ), 50–54 (CCQSV), 55–59 (CCQPT), 60–64 (CCRPS), 65–69 (CCQTT), 70–74 (CCRTT), 75–79 (CCRPS), 80–84 (CCVSS), 85–89 (CCRPQ), 90–94 (CCQSV), 95–99 (CCQPT), 100–104 (CCRPS), 105–109 (CCQTT), 110–114 (CCRTT), 115–119 (CCRPS), 120–124 (CCVSS), 125–129 (CCRPQ), 130–134 (CCQSV), 135–139 (CCQPT), 140–144 (CCRPS), 145–149 (CCISS), 155–159 (CCESS), 160–164 (CCRPC), and 165–169 (CCLRP). Positions 5-169 (CCGSVCSDQG…CCRPCCCLRP (165 aa)) are 31 X 5 AA repeats of C-C-[GRQVIL]-[SPTR]-[VSTQPC].

This sequence belongs to the KRTAP type 4 family. In terms of assembly, interacts with hair keratins. In terms of tissue distribution, expressed in the hair follicles.

In terms of biological role, in the hair cortex, hair keratin intermediate filaments are embedded in an interfilamentous matrix, consisting of hair keratin-associated proteins (KRTAP), which are essential for the formation of a rigid and resistant hair shaft through their extensive disulfide bond cross-linking with abundant cysteine residues of hair keratins. The matrix proteins include the high-sulfur and high-glycine-tyrosine keratins. The polypeptide is Keratin-associated protein 4-12 (KRTAP4-12) (Homo sapiens (Human)).